The following is a 323-amino-acid chain: Porphobilinogen deaminase (323 aa).

S-(dipyrrolylmethanemethyl)cysteine is present on Cys-240.

The protein belongs to the HMBS family. As to quaternary structure, monomer. Dipyrromethane is required as a cofactor.

The enzyme catalyses 4 porphobilinogen + H2O = hydroxymethylbilane + 4 NH4(+). It functions in the pathway porphyrin-containing compound metabolism; protoporphyrin-IX biosynthesis; coproporphyrinogen-III from 5-aminolevulinate: step 2/4. Tetrapolymerization of the monopyrrole PBG into the hydroxymethylbilane pre-uroporphyrinogen in several discrete steps. The sequence is that of Porphobilinogen deaminase from Sulfurovum sp. (strain NBC37-1).